We begin with the raw amino-acid sequence, 535 residues long: Cytochrome c oxidase subunit 1 (535 aa).

Residues 21–43 (VLYFIFALFSAMIGTGLSAIIRL) traverse the membrane as a helical segment. Residues glutamate 44 and glycine 49 each coordinate Ca(2+). The next 6 membrane-spanning stretches (helical) occupy residues 63-85 (VITAHAILMIFFFVMPALVGGFG), 106-128 (ISFWLLVPSLILILTSALVEAGA), 153-175 (IFSLHLSGFSSLLGAINFITTFI), 188-210 (PLFAWAVLFTAILLLLSLPVLAA), 242-264 (YWWNHPEVYILIIPGFGIISHAV), and 271-293 (PVFGVQGMIYAMWSIGLLGFCVW). Histidine 67 contributes to the Fe(II)-heme a binding site. Histidine 246 serves as a coordination point for Cu cation. The 1'-histidyl-3'-tyrosine (His-Tyr) cross-link spans 246–250 (HPEVY). Tyrosine 250 contributes to the O2 binding site. Positions 295 and 296 each coordinate Cu cation. The next 2 membrane-spanning stretches (helical) occupy residues 308–330 (AYFTSATMVIAVPTSIKIFSWLA) and 342–364 (TALFALGFIFLFTIGGLTGVVLA). 2 residues coordinate Mg(2+): histidine 373 and aspartate 374. 3 helical membrane-spanning segments follow: residues 379–401 (VAHFHYVLSMGAVFSIFCGWYLW), 414–436 (LSHIHFWLMFIGVNVTFFPMHFL), and 456–478 (NQVASLGSIISIVASIVFIYVVY). Residue histidine 381 coordinates heme a3. Fe(II)-heme a is bound at residue histidine 383.

The protein belongs to the heme-copper respiratory oxidase family. As to quaternary structure, component of the cytochrome c oxidase (complex IV, CIV), a multisubunit enzyme composed of a catalytic core of 3 subunits and several supernumerary subunits. The complex exists as a monomer or a dimer and forms supercomplexes (SCs) in the inner mitochondrial membrane with ubiquinol-cytochrome c oxidoreductase (cytochrome b-c1 complex, complex III, CIII). Heme is required as a cofactor. Requires Cu cation as cofactor.

It localises to the mitochondrion inner membrane. The enzyme catalyses 4 Fe(II)-[cytochrome c] + O2 + 8 H(+)(in) = 4 Fe(III)-[cytochrome c] + 2 H2O + 4 H(+)(out). The protein operates within energy metabolism; oxidative phosphorylation. Functionally, component of the cytochrome c oxidase, the last enzyme in the mitochondrial electron transport chain which drives oxidative phosphorylation. The respiratory chain contains 3 multisubunit complexes succinate dehydrogenase (complex II, CII), ubiquinol-cytochrome c oxidoreductase (cytochrome b-c1 complex, complex III, CIII) and cytochrome c oxidase (complex IV, CIV), that cooperate to transfer electrons derived from NADH and succinate to molecular oxygen, creating an electrochemical gradient over the inner membrane that drives transmembrane transport and the ATP synthase. Cytochrome c oxidase is the component of the respiratory chain that catalyzes the reduction of oxygen to water. Electrons originating from reduced cytochrome c in the intermembrane space (IMS) are transferred via the dinuclear copper A center (CU(A)) of subunit 2 and heme A of subunit 1 to the active site in subunit 1, a binuclear center (BNC) formed by heme A3 and copper B (CU(B)). The BNC reduces molecular oxygen to 2 water molecules using 4 electrons from cytochrome c in the IMS and 4 protons from the mitochondrial matrix. The sequence is that of Cytochrome c oxidase subunit 1 (COX1) from Yarrowia lipolytica (strain CLIB 122 / E 150) (Yeast).